The sequence spans 346 residues: c-di-GMP synthase (346 aa).

This sequence belongs to the CD-NTase family.

It catalyses the reaction 2 GTP = 3',3'-c-di-GMP + 2 diphosphate. Its function is as follows. Cyclic nucleotide synthase (second messenger synthase) of a CBASS antivirus system. CBASS (cyclic oligonucleotide-based antiphage signaling system) provides immunity against bacteriophage. The CD-NTase protein synthesizes cyclic nucleotides in response to infection; these serve as specific second messenger signals. The signals activate a diverse range of effectors, leading to bacterial cell death and thus abortive phage infection. A type I-D(GG) CBASS system. In terms of biological role, cyclic dinucleotide synthase that catalyzes the synthesis of c-di-GMP, has no activity with other NTP substrates. The chain is c-di-GMP synthase from Lachnospiraceae bacterium (strain RUG226).